Here is a 201-residue protein sequence, read N- to C-terminus: Retinol binding protein 4 (201 aa).

The N-terminal stretch at 1–18 is a signal peptide; sequence MAWVWALVLLAALGSARA. 3 cysteine pairs are disulfide-bonded: C22–C178, C88–C192, and C138–C147. Q116 contacts substrate. Position 139 is an omega-N-methylarginine (R139).

This sequence belongs to the calycin superfamily. Lipocalin family. Interacts with TTR. Interaction with TTR prevents its loss by filtration through the kidney glomeruli. Interacts with STRA6. As to expression, highly expressed in liver. Also expressed in adipose tissue. Expressed by endometrium from days 16-25 and by unattached chorioallantois from days 30-36 during pregnancy.

It is found in the secreted. Its function is as follows. Retinol-binding protein that mediates retinol transport in blood plasma. Delivers retinol from the liver stores to the peripheral tissues. Transfers the bound all-trans retinol to STRA6, that then facilitates retinol transport across the cell membrane. This chain is Retinol binding protein 4, found in Felis catus (Cat).